We begin with the raw amino-acid sequence, 418 residues long: Putative ion-transport protein YfeO (418 aa).

12 helical membrane passes run 10-30 (LLLS…LIVV), 54-74 (DSPF…GLVI), 99-119 (ALPG…SLGP), 120-140 (EHPI…RLLP), 149-169 (ILAS…AALI), 186-206 (LFAP…FFHP), 223-243 (ILSG…AVWC), 258-278 (VLML…AGPV), 300-320 (DYFL…ASGF), 322-342 (GGRI…LHEH), 343-363 (VPAV…VLVV), and 371-391 (LFMA…CIVM).

It belongs to the chloride channel (TC 2.A.49) family.

Its subcellular location is the cell membrane. The protein is Putative ion-transport protein YfeO of Escherichia coli (strain SMS-3-5 / SECEC).